The sequence spans 480 residues: Glutamyl-tRNA(Gln) amidotransferase subunit A (480 aa).

Catalysis depends on charge relay system residues Lys-79 and Ser-154. The segment at 133–156 (NENSAYGPVRNPRDKSRVPGGSSG) is disordered. The Acyl-ester intermediate role is filled by Ser-178.

It belongs to the amidase family. GatA subfamily. In terms of assembly, heterotrimer of A, B and C subunits.

The enzyme catalyses L-glutamyl-tRNA(Gln) + L-glutamine + ATP + H2O = L-glutaminyl-tRNA(Gln) + L-glutamate + ADP + phosphate + H(+). Functionally, allows the formation of correctly charged Gln-tRNA(Gln) through the transamidation of misacylated Glu-tRNA(Gln) in organisms which lack glutaminyl-tRNA synthetase. The reaction takes place in the presence of glutamine and ATP through an activated gamma-phospho-Glu-tRNA(Gln). This chain is Glutamyl-tRNA(Gln) amidotransferase subunit A, found in Koribacter versatilis (strain Ellin345).